We begin with the raw amino-acid sequence, 152 residues long: Protein SprT-like (152 aa).

Residues 7 to 148 (QRLVEEVSLQ…GKCKGKLILI (142 aa)) form the SprT-like domain. Zn(2+) is bound at residue H67. Residue E68 is part of the active site. H71 contacts Zn(2+).

It belongs to the SprT family. The cofactor is Zn(2+).

The protein localises to the cytoplasm. The sequence is that of Protein SprT-like from Bacillus thuringiensis subsp. konkukian (strain 97-27).